A 953-amino-acid polypeptide reads, in one-letter code: Coatomer subunit beta (953 aa).

The residue at position 2 (T2) is an N-acetylthreonine. HEAT repeat units lie at residues 96 to 131 (HEMI…KEAE), 132 to 168 (LLEP…NFEH), 240 to 276 (SERA…SAPT), 277 to 314 (AIKA…HPAH), 316 to 353 (RVLQ…SRNV), and 396 to 433 (DMAA…RFDN). An N6-acetyllysine modification is found at K494.

Oligomeric complex that consists of at least the alpha, beta, beta', gamma, delta, epsilon and zeta subunits. Interacts with CAPN8. Interacts with SCYL1 and PRKCE. Interacts with COPG1. Interacts with ARF1 (myristoylated); this interaction is required for binding of COPB1 to Golgi membranes. Interacts (via trunk domain) with ARF1 (via switch I region); the interaction is direct. Interacts with KCNK2 (via N-terminus); this interaction increases the channel-mediated whole cell currents and promotes plasma membrane expression of KCNK2. Interacts with STX17. Interacts with TMEM115. Interacts with TMEM41B. Proteolytically cleaved between Ser-528 and Ser-529 by CAPN8. Predominantly expressed in the upper one-third of the oxyntic mucosa and in most regions of the pyloric mucosa. Ubiquitously expressed including platelet, liver, heart, spleen, lung and kidney.

The protein resides in the cytoplasm. It localises to the golgi apparatus membrane. Its subcellular location is the cytoplasmic vesicle. It is found in the COPI-coated vesicle membrane. The protein localises to the cell membrane. The protein resides in the endoplasmic reticulum-Golgi intermediate compartment. Its function is as follows. The coatomer is a cytosolic protein complex that binds to dilysine motifs and reversibly associates with Golgi non-clathrin-coated vesicles, which further mediate biosynthetic protein transport from the ER, via the Golgi up to the trans Golgi network. Coatomer complex is required for budding from Golgi membranes, and is essential for the retrograde Golgi-to-ER transport of dilysine-tagged proteins. In mammals, the coatomer can only be recruited by membranes associated to ADP-ribosylation factors (ARFs), which are small GTP-binding proteins; the complex also influences the Golgi structural integrity, as well as the processing, activity, and endocytic recycling of LDL receptors. Involved in the Golgi disassembly and reassembly processes during cell cycle. Involved in autophagy by playing a role in early endosome function. Plays a role in organellar compartmentalization of secretory compartments including endoplasmic reticulum (ER)-Golgi intermediate compartment (ERGIC), Golgi, trans-Golgi network (TGN) and recycling endosomes, and in biosynthetic transport of CAV1. Plays a functional role in facilitating the transport of kappa-type opioid receptor mRNAs into axons and enhances translation of these proteins in cortical neurons. Required for limiting lipid storage in lipid droplets. Involved in lipid homeostasis by regulating the presence of perilipin family members PLIN2 and PLIN3 at the lipid droplet surface and promoting the association of adipocyte triglyceride lipase (PNPLA2) with the lipid droplet surface to mediate lipolysis. The chain is Coatomer subunit beta (Copb1) from Mus musculus (Mouse).